Here is a 407-residue protein sequence, read N- to C-terminus: Phosphonoacetate hydrolase (407 aa).

7 residues coordinate Zn(2+): D25, T64, D202, H206, D241, H242, and H368. Residues T64 and D202 each coordinate substrate. Residues H242 and H368 each coordinate substrate.

The protein belongs to the alkaline phosphatase family. PhnA subfamily. In terms of assembly, homodimer. It depends on Zn(2+) as a cofactor.

It catalyses the reaction phosphonoacetate + H2O = acetate + phosphate + H(+). Functionally, specifically hydrolyzes phosphonoacetate. Does not have activity on other organophosphonates or acetates. The chain is Phosphonoacetate hydrolase from Pseudomonas putida (Arthrobacter siderocapsulatus).